Reading from the N-terminus, the 377-residue chain is MSRGIIIIGSGFAARQLVKNIRKQDAHVPLTLIAADSMDEYNKPDLSHVISQSQRADDLTRQLAGEFAEQFNLRLFPHTWVADIDADAHVVKSQDKQWQYDKLVLATGATAFVPPITGRELMLTLNSQQEYRACETQLRDAQRVMIVGGGLIGSELAMDFCRAGKTVTLMDNAASLLASLMPPEVSSRLQHHLTDMGVHLLLKSQLQKLEKTEAGIRATLVSQRNIEVDAVIAATGLRPETALARRAGVAVNRGVCVDSYLQTSHPDIYAIGDCAEINGQVLPFLQPIQLSAMYLAKNLLGGNAPLKLPAMLVKVKTPELPLHLAGETQRRDLSWQITAESDGMIAKGMSGEGQLRAFVVSEDRMKEAFALLKTLSV.

The protein belongs to the FAD-dependent oxidoreductase family. FAD serves as cofactor.

It localises to the cytoplasm. The enzyme catalyses 2 reduced [nitric oxide reductase rubredoxin domain] + NAD(+) + H(+) = 2 oxidized [nitric oxide reductase rubredoxin domain] + NADH. It functions in the pathway nitrogen metabolism; nitric oxide reduction. In terms of biological role, one of at least two accessory proteins for anaerobic nitric oxide (NO) reductase. Reduces the rubredoxin moiety of NO reductase. This Salmonella schwarzengrund (strain CVM19633) protein is Nitric oxide reductase FlRd-NAD(+) reductase.